The primary structure comprises 431 residues: 3-phosphoshikimate 1-carboxyvinyltransferase (431 aa).

The 3-phosphoshikimate site is built by K22, S23, and R27. Phosphoenolpyruvate is bound at residue K22. Phosphoenolpyruvate contacts are provided by G94 and R122. 3-phosphoshikimate contacts are provided by S167, Q169, D315, and K342. Q169 is a phosphoenolpyruvate binding site. D315 functions as the Proton acceptor in the catalytic mechanism. The phosphoenolpyruvate site is built by R346 and R388.

Belongs to the EPSP synthase family. In terms of assembly, monomer.

The protein resides in the cytoplasm. It carries out the reaction 3-phosphoshikimate + phosphoenolpyruvate = 5-O-(1-carboxyvinyl)-3-phosphoshikimate + phosphate. The protein operates within metabolic intermediate biosynthesis; chorismate biosynthesis; chorismate from D-erythrose 4-phosphate and phosphoenolpyruvate: step 6/7. In terms of biological role, catalyzes the transfer of the enolpyruvyl moiety of phosphoenolpyruvate (PEP) to the 5-hydroxyl of shikimate-3-phosphate (S3P) to produce enolpyruvyl shikimate-3-phosphate and inorganic phosphate. This Pelobacter propionicus (strain DSM 2379 / NBRC 103807 / OttBd1) protein is 3-phosphoshikimate 1-carboxyvinyltransferase.